Reading from the N-terminus, the 92-residue chain is Small ribosomal subunit protein bS18 (92 aa).

Positions 1–22 are disordered; it reads MADERAPQRSTSGPRKKRPFQR.

Belongs to the bacterial ribosomal protein bS18 family. Part of the 30S ribosomal subunit. Forms a tight heterodimer with protein bS6.

Its function is as follows. Binds as a heterodimer with protein bS6 to the central domain of the 16S rRNA, where it helps stabilize the platform of the 30S subunit. The protein is Small ribosomal subunit protein bS18 of Citrifermentans bemidjiense (strain ATCC BAA-1014 / DSM 16622 / JCM 12645 / Bem) (Geobacter bemidjiensis).